A 223-amino-acid polypeptide reads, in one-letter code: Cytochrome c biogenesis ATP-binding export protein CcmA (223 aa).

The ABC transporter domain occupies 20–222 (LAAHALTYSR…PTRLLHLKKA (203 aa)). 52–59 (GPNGIGKT) contacts ATP.

Belongs to the ABC transporter superfamily. CcmA exporter (TC 3.A.1.107) family. In terms of assembly, the complex is composed of two ATP-binding proteins (CcmA) and two transmembrane proteins (CcmB).

Its subcellular location is the cell inner membrane. The enzyme catalyses heme b(in) + ATP + H2O = heme b(out) + ADP + phosphate + H(+). In terms of biological role, part of the ABC transporter complex CcmAB involved in the biogenesis of c-type cytochromes; once thought to export heme, this seems not to be the case, but its exact role is uncertain. Responsible for energy coupling to the transport system. The protein is Cytochrome c biogenesis ATP-binding export protein CcmA of Xylella fastidiosa (strain 9a5c).